The sequence spans 257 residues: 3-deoxy-manno-octulosonate cytidylyltransferase (257 aa).

Belongs to the KdsB family.

The protein resides in the cytoplasm. It catalyses the reaction 3-deoxy-alpha-D-manno-oct-2-ulosonate + CTP = CMP-3-deoxy-beta-D-manno-octulosonate + diphosphate. Its pathway is nucleotide-sugar biosynthesis; CMP-3-deoxy-D-manno-octulosonate biosynthesis; CMP-3-deoxy-D-manno-octulosonate from 3-deoxy-D-manno-octulosonate and CTP: step 1/1. The protein operates within bacterial outer membrane biogenesis; lipopolysaccharide biosynthesis. In terms of biological role, activates KDO (a required 8-carbon sugar) for incorporation into bacterial lipopolysaccharide in Gram-negative bacteria. The chain is 3-deoxy-manno-octulosonate cytidylyltransferase from Methylobacillus flagellatus (strain ATCC 51484 / DSM 6875 / VKM B-1610 / KT).